A 285-amino-acid chain; its full sequence is 2-dehydro-3-deoxyphosphooctonate aldolase (285 aa).

It belongs to the KdsA family.

The protein resides in the cytoplasm. It catalyses the reaction D-arabinose 5-phosphate + phosphoenolpyruvate + H2O = 3-deoxy-alpha-D-manno-2-octulosonate-8-phosphate + phosphate. It participates in carbohydrate biosynthesis; 3-deoxy-D-manno-octulosonate biosynthesis; 3-deoxy-D-manno-octulosonate from D-ribulose 5-phosphate: step 2/3. It functions in the pathway bacterial outer membrane biogenesis; lipopolysaccharide biosynthesis. This Acinetobacter baumannii (strain AB307-0294) protein is 2-dehydro-3-deoxyphosphooctonate aldolase.